The primary structure comprises 116 residues: Host cell factor C1 regulator 1 (116 aa).

Positions 1–22 (MILQQPLERGPPGRDPRATTGV) are disordered. Residues 54–57 (DHPY) form an interaction with HCFC1 region. The Nuclear export signal signature appears at 88 to 97 (IPEALRLLRL).

Interacts with HCFC1.

It is found in the cytoplasm. Its subcellular location is the nucleus. Its function is as follows. Regulates HCFC1 activity by modulating its subcellular localization. Overexpression of HCFC1R1 leads to accumulation of HCFC1 in the cytoplasm. HCFC1R1-mediated export may provide the pool of cytoplasmic HCFC1 required for import of virion-derived VP16 into the nucleus. This is Host cell factor C1 regulator 1 (Hcfc1r1) from Rattus norvegicus (Rat).